Reading from the N-terminus, the 248-residue chain is MREDNPNWFLRWEEELPSPEELIPISQTLITPHLALAFQIGSPNHHLGSKRTTAIYHQKLQSSTTPTTPTPTPPPMMMNSDFGGGDSTDLGSGSIGGEPARTLKRPRLVWTPQLHKRFVDAVGHLGIKNAVPKTIMQLMSVEGLTRENVASHLQKYRLYLRRMQGGNGNGITGGHVIVSDSATDRLFASSPVPAHFLSPDYLMPPLEHSYMGKHVITQQNQVVRNLRYEDSEYGHGSMKMLKLFPAGN.

The segment at residues 102–161 (TLKRPRLVWTPQLHKRFVDAVGHLGIKNAVPKTIMQLMSVEGLTRENVASHLQKYRLYLR) is a DNA-binding region (myb-like GARP).

Expressed in roots, leaves, stems, petioles, filaments, stigma, pedicels, sepals, anthers, petals, and siliques.

It localises to the nucleus. Its function is as follows. Probable transcription factor that acts as a negative regulator of freezing tolerance via a CBF-independent pathway. The sequence is that of Transcription factor MYBC1 from Arabidopsis thaliana (Mouse-ear cress).